Reading from the N-terminus, the 224-residue chain is Synaptogyrin-2 (224 aa).

M1 bears the N-acetylmethionine mark. Phosphoserine is present on S3. Residues 20–171 (FLTQPQVVAR…LASLAYQRYK (152 aa)) form the MARVEL domain. The next 4 membrane-spanning stretches (helical) occupy residues 26–46 (VVAR…IYGE), 73–93 (AIGV…AYFP), 105–125 (VIGD…GFCF), and 147–167 (AAIT…SLAY).

The protein belongs to the synaptogyrin family. As to quaternary structure, (Microbial infection) Interacts with SFTS phlebovirus protein NSs; may be involved in virus replication. Post-translationally, may be tyrosine phosphorylated by Src. As to expression, ubiquitous; low expression in brain.

Its subcellular location is the cytoplasmic vesicle membrane. It localises to the cytoplasmic vesicle. The protein localises to the secretory vesicle. It is found in the synaptic vesicle membrane. The protein resides in the lipid droplet. Functionally, may play a role in regulated exocytosis. In neuronal cells, modulates the localization of synaptophysin/SYP into synaptic-like microvesicles and may therefore play a role in the formation and/or the maturation of this vesicles. May also play a role in GLUT4 storage and transport to the plasma membrane. In terms of biological role, (Microbial infection) May play a role in the assembly of cytoplasmic inclusion bodies required for SFTS phlebovirus replication. This chain is Synaptogyrin-2, found in Homo sapiens (Human).